Consider the following 245-residue polypeptide: tRNA pseudouridine synthase A 2 (245 aa).

Asp53 functions as the Nucleophile in the catalytic mechanism. Substrate is bound at residue Tyr111.

It belongs to the tRNA pseudouridine synthase TruA family. In terms of assembly, homodimer.

It catalyses the reaction uridine(38/39/40) in tRNA = pseudouridine(38/39/40) in tRNA. Functionally, formation of pseudouridine at positions 38, 39 and 40 in the anticodon stem and loop of transfer RNAs. In Bacillus cereus (strain ZK / E33L), this protein is tRNA pseudouridine synthase A 2.